Reading from the N-terminus, the 531-residue chain is Squalene epoxidase 1 (531 aa).

A helical membrane pass occupies residues 9-29 (ILPLLISSLLISFVAFYGFFV). FAD is bound by residues 70-71 (VA), 90-91 (ER), Arg98, Arg169, Val185, Asp347, and Met360. Transmembrane regions (helical) follow at residues 458-478 (LVCH…IPFP) and 483-503 (IWLG…IIKA).

It belongs to the squalene monooxygenase family. It depends on FAD as a cofactor. In terms of tissue distribution, expressed in seedlings, leaves, stems, inflorescences, sepals, style and siliques. Expressed in expanded cotyledons, root tips and cortical cells of the root elongation zone, but not in root hair cells. In leaves, expressed in most cells, with a very strong expression in stomata.

The protein localises to the membrane. The enzyme catalyses squalene + reduced [NADPH--hemoprotein reductase] + O2 = (S)-2,3-epoxysqualene + oxidized [NADPH--hemoprotein reductase] + H2O + H(+). The protein operates within terpene metabolism; lanosterol biosynthesis; lanosterol from farnesyl diphosphate: step 2/3. Functionally, catalyzes the stereospecific oxidation of squalene to (S)-2,3-epoxysqualene, and is considered to be a rate-limiting enzyme in steroid biosynthesis. Can produce not only oxidosqualene, but also 2,3:22,23-dioxidosqualene. Main squalene epoxidase in the root. Sqe1 mutants may show defects in membrane lipid rafts, impairing the correct localization of RHD2 NADPH oxidase and the proper polarized production of ROS. The polypeptide is Squalene epoxidase 1 (SQE1) (Arabidopsis thaliana (Mouse-ear cress)).